The sequence spans 547 residues: Auxin transporter-like protein 3 (547 aa).

Over 1-74 (MASGSSGGGY…DAWFSCASNQ (74 aa)) the chain is Cytoplasmic. Residues 75–92 (VAQVLLTLPYSFAQLGMA) traverse the membrane as a helical segment. The Extracellular portion of the chain corresponds to 93 to 94 (SG). A helical transmembrane segment spans residues 95 to 115 (LLFQLFYGLLGSWTAYLISIL). Over 116 to 151 (YLEYRTRKERDKVDFRNHVIQWFEVLDGLLGRHWRN) the chain is Cytoplasmic. The helical transmembrane segment at 152-172 (VGLAFNCTFLLFGSVIQLIGC) threads the bilayer. Topologically, residues 173-187 (ASNIYYINDHLDKRT) are extracellular. The helical transmembrane segment at 188 to 208 (WTYIFGACCATTVFIPSFHNY) threads the bilayer. Residues 209 to 211 (RIW) are Cytoplasmic-facing. A helical membrane pass occupies residues 212–232 (SFLGLLMTTYTAWYIAVASLI). Residues 233 to 247 (HGQVEGVAHSGPTSI) lie on the Extracellular side of the membrane. Residues 248–268 (VLYFTGATNILYTFGGHAVTV) form a helical membrane-spanning segment. Topologically, residues 269–281 (EIMHAMWRPQKFK) are cytoplasmic. A helical transmembrane segment spans residues 282–302 (AIYLLATVYVLTLTLPSASAA). The Extracellular segment spans residues 303–329 (YWAFGDALLTHSNALALLPRTPWRDAA). A helical transmembrane segment spans residues 330-350 (VVLMLIHQFITFGFACTPLYF). Residues 351 to 371 (VWEKLVGLHGCPSLCKRAAAR) lie on the Cytoplasmic side of the membrane. A helical transmembrane segment spans residues 372 to 392 (LPVVLPIWFLAIIFPFFGPIN). A topological domain (extracellular) is located at residue Ser-393. The helical transmembrane segment at 394–414 (AVGSLLVSFTVYIIPSLAYMV) threads the bilayer. Residues 415 to 440 (TFRSPQSRQNAVERPPRFAGGWTGAY) lie on the Cytoplasmic side of the membrane. The chain crosses the membrane as a helical span at residues 441-461 (VINSFVVAWVLVVGFGFGGWA). The Extracellular portion of the chain corresponds to 462 to 547 (SITNFVHQVD…HHHRHHRHGL (86 aa)). Asn-509 carries an N-linked (GlcNAc...) asparagine glycan.

It belongs to the amino acid/polyamine transporter 2 family. Amino acid/auxin permease (AAAP) (TC 2.A.18.1) subfamily.

Its subcellular location is the cell membrane. Its function is as follows. Carrier protein involved in proton-driven auxin influx. May mediate the formation of auxin gradient from developing leaves (site of auxin biosynthesis) to tips. The protein is Auxin transporter-like protein 3 of Oryza sativa subsp. japonica (Rice).